The following is a 506-amino-acid chain: NADH-quinone oxidoreductase subunit N (506 aa).

Helical transmembrane passes span 14–34 (MVPE…DLFF), 40–60 (YVAL…ITLY), 72–92 (FVLD…AALI), 109–129 (GEYY…ASSV), 131–151 (FVTL…LVGI), 166–186 (VING…LYGI), 209–229 (LLLA…IATV), 256–276 (MAGF…VSVQ), 286–306 (MSIY…VVAL), 314–334 (LFAY…VALS), 343–363 (FYML…HGLI), 385–405 (AIVM…AGFI), 420–440 (AHYV…VYYF), and 465–485 (IVMS…MIGY).

It belongs to the complex I subunit 2 family. In terms of assembly, NDH-1 is composed of 14 different subunits. Subunits NuoA, H, J, K, L, M, N constitute the membrane sector of the complex.

The protein localises to the cell membrane. It carries out the reaction a quinone + NADH + 5 H(+)(in) = a quinol + NAD(+) + 4 H(+)(out). In terms of biological role, NDH-1 shuttles electrons from NADH, via FMN and iron-sulfur (Fe-S) centers, to quinones in the respiratory chain. The immediate electron acceptor for the enzyme in this species is believed to be a menaquinone. Couples the redox reaction to proton translocation (for every two electrons transferred, four hydrogen ions are translocated across the cytoplasmic membrane), and thus conserves the redox energy in a proton gradient. This chain is NADH-quinone oxidoreductase subunit N, found in Bacillus anthracis.